Here is a 426-residue protein sequence, read N- to C-terminus: Glutamate-1-semialdehyde 2,1-aminomutase (426 aa).

Lys265 carries the post-translational modification N6-(pyridoxal phosphate)lysine.

It belongs to the class-III pyridoxal-phosphate-dependent aminotransferase family. HemL subfamily. As to quaternary structure, homodimer. Pyridoxal 5'-phosphate is required as a cofactor.

Its subcellular location is the cytoplasm. It catalyses the reaction (S)-4-amino-5-oxopentanoate = 5-aminolevulinate. The protein operates within porphyrin-containing compound metabolism; protoporphyrin-IX biosynthesis; 5-aminolevulinate from L-glutamyl-tRNA(Glu): step 2/2. The chain is Glutamate-1-semialdehyde 2,1-aminomutase from Escherichia coli O157:H7.